Reading from the N-terminus, the 357-residue chain is Dihydroorotate dehydrogenase (quinone) (357 aa).

Residues 66-70 and Thr-90 each bind FMN; that span reads AGFDK. Position 70 (Lys-70) interacts with substrate. A substrate-binding site is contributed by 115-119; that stretch reads NRMGF. The FMN site is built by Asn-143 and Asn-176. Asn-176 provides a ligand contact to substrate. Catalysis depends on Ser-179, which acts as the Nucleophile. Asn-181 lines the substrate pocket. FMN is bound by residues Lys-212 and Thr-240. 241 to 242 is a substrate binding site; that stretch reads NT. FMN is bound by residues Gly-264, Gly-293, and 314–315; that span reads YT.

This sequence belongs to the dihydroorotate dehydrogenase family. Type 2 subfamily. As to quaternary structure, monomer. FMN serves as cofactor.

Its subcellular location is the cell membrane. It carries out the reaction (S)-dihydroorotate + a quinone = orotate + a quinol. It functions in the pathway pyrimidine metabolism; UMP biosynthesis via de novo pathway; orotate from (S)-dihydroorotate (quinone route): step 1/1. Its function is as follows. Catalyzes the conversion of dihydroorotate to orotate with quinone as electron acceptor. In Mycobacterium tuberculosis (strain ATCC 25177 / H37Ra), this protein is Dihydroorotate dehydrogenase (quinone).